Here is a 289-residue protein sequence, read N- to C-terminus: uncharacterized protein (289 aa).

Polar residues predominate over residues 80–96 (PLNESRTSFKNIPQSRN). Disordered regions lie at residues 80 to 101 (PLNE…PRDY) and 136 to 157 (PREN…RMRE).

This is an uncharacterized protein from Acanthamoeba polyphaga (Amoeba).